Consider the following 1086-residue polypeptide: Rh5-interacting protein (1086 aa).

The signal sequence occupies residues 1–19 (MFRIFFTLLIIILIKKTSA). Asparagine 103, asparagine 144, asparagine 228, asparagine 303, asparagine 334, asparagine 480, asparagine 498, asparagine 506, asparagine 526, and asparagine 646 each carry an N-linked (GlcNAc...) asparagine glycan. EGF-like domains lie at 287–321 (RCTQ…NNCE) and 325–362 (LCTV…NKCY). EGF-like domains follow at residues 636–675 (SCSN…KLCE), 679–715 (DCES…GKCV), 719–753 (KCDL…GVCI), 818–854 (YCKD…GECI), 858–897 (SCLI…GKCV), 901–938 (KCVH…GVCL), and 942–979 (PCLK…DSCV). Residues asparagine 964 and asparagine 1021 are each glycosylated (N-linked (GlcNAc...) asparagine).

Component of the PfRH5 adhesion complex composed of 1 copy of CyRPA, RH5 and RIPR; the complex is formed during merozoite invasion of host erythrocytes specifically at the interface between the parasite and host membranes. Within the complex, interacts with CyRPA. CyRPA recruitment of RIPR to RH5-P113-BSG leads to the formation of the PfRH5 adhesion complex which probably in turn releases RH5 from P113 while maintaining the interaction of the PfRH5 adhesion complex with BSG. Post-translationally, proteolytically cleaved into two chains of 125kDa and 65kDa which remain associated. The cleavage occurs at the schizont stage prior to the release of merozoites. In terms of processing, contains disulfide bonds.

It localises to the secreted. Its subcellular location is the cytoplasmic vesicle. The protein localises to the secretory vesicle. The protein resides in the microneme lumen. It is found in the cell membrane. It localises to the host cell membrane. Functionally, essential for the invasion of host erythrocytes by blood stage merozoites. As part of the PfRH5 adhesion complex, facilitates the interaction of RH5 and human BSG required for the Ca(2+) release into the erythrocyte. The chain is Rh5-interacting protein (RIPR) from Plasmodium falciparum (isolate 3D7).